We begin with the raw amino-acid sequence, 715 residues long: Interferon-induced GTP-binding protein Mx2 (715 aa).

The span at 1–14 shows a compositional bias: basic residues; that stretch reads MSKAHKSWPHRRRN. Disordered stretches follow at residues 1 to 24 and 69 to 88; these read MSKA…SLKK and NNQP…PENN. The span at 69-80 shows a compositional bias: polar residues; sequence NNQPLPGNTSQP. The Dynamin-type G domain occupies 115–387; it reads DLALPAIAVI…LITHIQKSLP (273 aa). The segment at 125–132 is G1 motif; sequence GDQSSGKS. 125–132 provides a ligand contact to GTP; that stretch reads GDQSSGKS. The interval 150–152 is G2 motif; sequence VTR. A G3 motif region spans residues 225-228; the sequence is DLPG. Residues 225 to 229 and 294 to 297 each bind GTP; these read DLPGI and TKPD. The tract at residues 294 to 297 is G4 motif; the sequence is TKPD. The tract at residues 326–329 is G5 motif; it reads KCRG. Residues 623–714 enclose the GED domain; the sequence is FNEIGVHLNA…ALCQFSSKEI (92 aa).

This sequence belongs to the TRAFAC class dynamin-like GTPase superfamily. Dynamin/Fzo/YdjA family.

It localises to the cytoplasm. The protein resides in the nucleus. Functionally, interferon-induced dynamin-like GTPase with antiviral activity. This Macaca mulatta (Rhesus macaque) protein is Interferon-induced GTP-binding protein Mx2 (MX2).